The primary structure comprises 345 residues: N-acetyl-gamma-glutamyl-phosphate reductase (345 aa).

Residue cysteine 149 is part of the active site.

Belongs to the NAGSA dehydrogenase family. Type 1 subfamily.

It is found in the cytoplasm. It carries out the reaction N-acetyl-L-glutamate 5-semialdehyde + phosphate + NADP(+) = N-acetyl-L-glutamyl 5-phosphate + NADPH + H(+). It participates in amino-acid biosynthesis; L-arginine biosynthesis; N(2)-acetyl-L-ornithine from L-glutamate: step 3/4. Its function is as follows. Catalyzes the NADPH-dependent reduction of N-acetyl-5-glutamyl phosphate to yield N-acetyl-L-glutamate 5-semialdehyde. This chain is N-acetyl-gamma-glutamyl-phosphate reductase, found in Bacillus cereus (strain 03BB102).